Consider the following 484-residue polypeptide: Suppressor of fused homolog (484 aa).

The tract at residues 1-24 (MAELRPSGAPGPTAPPAPGPTAPP) is disordered. Over residues 12-23 (PTAPPAPGPTAP) the composition is skewed to pro residues. Lys-257 participates in a covalent cross-link: Glycyl lysine isopeptide (Lys-Gly) (interchain with G-Cter in ubiquitin). A disordered region spans residues 279–360 (SRPPEDDEDS…SSTAIIPHEL (82 aa)). Ser-301 carries the phosphoserine modification. The residue at position 303 (Lys-303) is an N6-acetyllysine. Lys-321 participates in a covalent cross-link: Glycyl lysine isopeptide (Lys-Gly) (interchain with G-Cter in SUMO2). Over residues 336–347 (AHDRAPSRKDSL) the composition is skewed to basic and acidic residues. A phosphoserine mark is found at Ser-342, Ser-346, and Ser-352. The residue at position 353 (Thr-353) is a Phosphothreonine. A Phosphoserine modification is found at Ser-481.

This sequence belongs to the SUFU family. As to quaternary structure, may form homodimers. Part of a DNA-bound corepressor complex containing SAP18, GLI1 and SIN3. Part of a complex containing CTNNB1. Binds BTRC, GLI2, GLI3, SAP18 and STK36. Binds both free and DNA-bound GLI1. Interacts with KIF7. Interacts with GLI3FL and this interaction regulates the formation of either repressor or activator forms of GLI3. Its association with GLI3FL is regulated by Hh signaling and dissociation of the SUFU-GLI3 interaction requires the presence of the ciliary motor KIF3A. Interacts with ULK3; inactivating the protein kinase activity of ULK3. Interacts with RAB23. Polyubiquitinated at Lys-257 by the SCF(FBXL17) complex, leading to its subsequent degradation and allowing the release of GLI1 for proper hedgehog/smoothened signal transduction. Ubiquitination is impaired by phosphorylation at Ser-342, Ser-346, Ser-352 and Thr-353. Post-translationally, phosphorylation at Ser-342, Ser-346, Ser-352 and Thr-353 prevents ubiquitination by the SCF(FBXL17) complex. In terms of tissue distribution, ubiquitous in adult tissues. Detected in osteoblasts of the perichondrium in the developing limb of 12-week old embryos. Isoform 1 is detected in fetal brain, lung, kidney and testis. Isoform 2 is detected in fetal testis, and at much lower levels in fetal brain, lung and kidney.

It is found in the cytoplasm. Its subcellular location is the nucleus. In terms of biological role, negative regulator in the hedgehog/smoothened signaling pathway. Down-regulates GLI1-mediated transactivation of target genes. Down-regulates GLI2-mediated transactivation of target genes. Part of a corepressor complex that acts on DNA-bound GLI1. May also act by linking GLI1 to BTRC and thereby targeting GLI1 to degradation by the proteasome. Sequesters GLI1, GLI2 and GLI3 in the cytoplasm, this effect is overcome by binding of STK36 to both SUFU and a GLI protein. Negative regulator of beta-catenin signaling. Regulates the formation of either the repressor form (GLI3R) or the activator form (GLI3A) of the full-length form of GLI3 (GLI3FL). GLI3FL is complexed with SUFU in the cytoplasm and is maintained in a neutral state. Without the Hh signal, the SUFU-GLI3 complex is recruited to cilia, leading to the efficient processing of GLI3FL into GLI3R. When Hh signaling is initiated, SUFU dissociates from GLI3FL and the latter translocates to the nucleus, where it is phosphorylated, destabilized, and converted to a transcriptional activator (GLI3A). Required for normal embryonic development. Required for the proper formation of hair follicles and the control of epidermal differentiation. This chain is Suppressor of fused homolog, found in Homo sapiens (Human).